Consider the following 315-residue polypeptide: MNQLNTAIVEKEVIDPMAFRRALGNFATGVTIMTAQTSSGERVGVTANSFNSVSLDPALVLWSIDKKSSSYRIFEEATHFGVNILSAAQIELSNRFARRSEDKFANIEFDLGVGNIPLFKNCSAAFECERYNIVEGGDHWIIIGRVVKFHDHGRSPLLYHQGAYSAVLPHPSLNMKSETAEGVFPGRLYDNMYYLLTQAVRAYQNDYQPKQLASGFRTSEARLLLVLESKTASSKCDLQREVAMPIREIEEATKILSEKGLLIDNGQHYELTEQGNACAHMLYKIAESHQEEVFAKYTVDERKLFKNMLKDLIGI.

Belongs to the non-flavoprotein flavin reductase family. In terms of assembly, homodimer. The p-hydroxyphenylacetate 3-hydroxylase (HpaH) is composed of an oxygenase component C2 and a reductase component C1.

The enzyme catalyses a reduced flavin + NAD(+) = an oxidized flavin + NADH + 2 H(+). It functions in the pathway aromatic compound metabolism; 4-hydroxyphenylacetate degradation; pyruvate and succinate semialdehyde from 4-hydroxyphenylacetate: step 1/7. Its activity is regulated as follows. Flavin concentrations greater than 15 uM do not inhibit the NADH oxidation activity of the reductase component C1 but do affect the hydroxylation activity of the C1-C2 complex. Maximal reductase activity is achieved only upon HPA binding to the reductase component C1 before interaction with NADH. HPA stimulates the rates of both the reduction of FMN and release of reduced FMN from the reductase component. Functionally, reductase component of a two-component system that supplies reduced FMN (FMNH2) to the oxygenase component to catalyze the hydroxylation of 4-hydroxyphenylacetic acid, leading to the production of 3,4-dihydroxyphenylacetate (3,4-DHPA). Catalyzes the reduction of free flavins (FMN, FAD and riboflavin) by NADH. Subsequently, the reduced flavins diffuse to the oxygenase component C2. This is p-hydroxyphenylacetate 3-hydroxylase, reductase component from Acinetobacter baumannii.